The primary structure comprises 212 residues: 7-carboxy-7-deazaguanine synthase (212 aa).

Residues 22–24 and Arg37 contribute to the substrate site; that span reads LQG. The Radical SAM core domain occupies 28–212; that stretch reads NTGMPAVFVR…VQTHKWAGIE (185 aa). Cys41, Cys45, and Cys48 together coordinate [4Fe-4S] cluster. Thr50 is a Mg(2+) binding site. Residue Thr78 participates in substrate binding. S-adenosyl-L-methionine is bound by residues Gly80 and 122–124; that span reads SPK.

Belongs to the radical SAM superfamily. 7-carboxy-7-deazaguanine synthase family. In terms of assembly, homodimer. [4Fe-4S] cluster serves as cofactor. S-adenosyl-L-methionine is required as a cofactor. Requires Mg(2+) as cofactor.

It carries out the reaction 6-carboxy-5,6,7,8-tetrahydropterin + H(+) = 7-carboxy-7-deazaguanine + NH4(+). It functions in the pathway purine metabolism; 7-cyano-7-deazaguanine biosynthesis. Its function is as follows. Catalyzes the complex heterocyclic radical-mediated conversion of 6-carboxy-5,6,7,8-tetrahydropterin (CPH4) to 7-carboxy-7-deazaguanine (CDG), a step common to the biosynthetic pathways of all 7-deazapurine-containing compounds. This is 7-carboxy-7-deazaguanine synthase from Neisseria meningitidis serogroup B (strain ATCC BAA-335 / MC58).